The chain runs to 184 residues: Photosystem I assembly protein Ycf4 (184 aa).

Transmembrane regions (helical) follow at residues 22–42 (FFWA…GTSS) and 57–77 (IPFF…LFIS).

Belongs to the Ycf4 family.

The protein localises to the plastid. Its subcellular location is the chloroplast thylakoid membrane. Seems to be required for the assembly of the photosystem I complex. The chain is Photosystem I assembly protein Ycf4 from Ceratophyllum demersum (Rigid hornwort).